We begin with the raw amino-acid sequence, 965 residues long: Pullulanase 1, chloroplastic (965 aa).

The transit peptide at 1 to 62 (MALTLTPTSS…SKTSLHCLCS (62 aa)) directs the protein to the chloroplast. Asp-552 functions as the Nucleophile in the catalytic mechanism. The active-site Proton donor is Glu-589.

This sequence belongs to the glycosyl hydrolase 13 family.

Its subcellular location is the plastid. It localises to the chloroplast stroma. The catalysed reaction is Hydrolysis of (1-&gt;6)-alpha-D-glucosidic linkages in alpha- and beta-limit dextrins of amylopectin and glycogen, and in amylopectin and pullulan.. It functions in the pathway glycan biosynthesis; starch biosynthesis. Its pathway is glycan degradation; starch degradation. Its function is as follows. Involved in starch degradation and also probably in the trimming of pre-amylopectin chains during starch synthesis. The polypeptide is Pullulanase 1, chloroplastic (PU1) (Arabidopsis thaliana (Mouse-ear cress)).